Reading from the N-terminus, the 307-residue chain is Recombination-associated protein RdgC (307 aa).

The protein belongs to the RdgC family.

It is found in the cytoplasm. Its subcellular location is the nucleoid. Its function is as follows. May be involved in recombination. This is Recombination-associated protein RdgC from Burkholderia cenocepacia (strain ATCC BAA-245 / DSM 16553 / LMG 16656 / NCTC 13227 / J2315 / CF5610) (Burkholderia cepacia (strain J2315)).